Consider the following 198-residue polypeptide: ATP-dependent Clp protease proteolytic subunit (198 aa).

Ser-101 serves as the catalytic Nucleophile. Residue His-126 is part of the active site.

It belongs to the peptidase S14 family. As to quaternary structure, component of the chloroplastic Clp protease core complex.

The protein localises to the plastid. Its subcellular location is the chloroplast stroma. It carries out the reaction Hydrolysis of proteins to small peptides in the presence of ATP and magnesium. alpha-casein is the usual test substrate. In the absence of ATP, only oligopeptides shorter than five residues are hydrolyzed (such as succinyl-Leu-Tyr-|-NHMec, and Leu-Tyr-Leu-|-Tyr-Trp, in which cleavage of the -Tyr-|-Leu- and -Tyr-|-Trp bonds also occurs).. In terms of biological role, cleaves peptides in various proteins in a process that requires ATP hydrolysis. Has a chymotrypsin-like activity. Plays a major role in the degradation of misfolded proteins. The chain is ATP-dependent Clp protease proteolytic subunit from Solanum bulbocastanum (Wild potato).